A 1486-amino-acid chain; its full sequence is Phosphatidylinositol 3-kinase C2 domain-containing subunit gamma (1486 aa).

The region spanning 285 to 371 is the PI3K-RBD domain; the sequence is KTKFNIHIFI…IQLHLQKSRE (87 aa). The C2 PI3K-type domain occupies 521–669; that stretch reads LPSHLSFTVY…SPVTLQIDFP (149 aa). In terms of domain architecture, PIK helical spans 684–860; the sequence is RSNLEEPLKE…QKLLAALQFC (177 aa). Positions 929–1207 constitute a PI3K/PI4K catalytic domain; the sequence is DHDACSYFTS…KIKESLECFP (279 aa). The G-loop stretch occupies residues 935 to 941; that stretch reads YFTSNAL. Residues 1071 to 1079 form a catalytic loop region; it reads GVCDRHNDN. The segment at 1090–1116 is activation loop; sequence HIDFGKFLGHAQTFGGIKRDRAPFIFT. In terms of domain architecture, PX spans 1240–1352; that stretch reads LSTTRSIERA…SFFLSEAVQQ (113 aa). In terms of domain architecture, C2 spans 1369 to 1486; sequence KKPKVQLVIS…KWYPLGNSII (118 aa).

It belongs to the PI3/PI4-kinase family. As to expression, highly expressed in liver, prostate and testis. Lower levels in small intestine, kidney and pancreas.

It localises to the membrane. It carries out the reaction a 1,2-diacyl-sn-glycero-3-phospho-(1D-myo-inositol 4-phosphate) + ATP = a 1,2-diacyl-sn-glycero-3-phospho-(1D-myo-inositol-3,4-bisphosphate) + ADP + H(+). The catalysed reaction is a 1,2-diacyl-sn-glycero-3-phospho-(1D-myo-inositol) + ATP = a 1,2-diacyl-sn-glycero-3-phospho-(1D-myo-inositol-3-phosphate) + ADP + H(+). Generates phosphatidylinositol 3-phosphate (PtdIns3P) and phosphatidylinositol 3,4-bisphosphate (PtdIns(3,4)P2) that act as second messengers. May play a role in SDF1A-stimulated chemotaxis. The sequence is that of Phosphatidylinositol 3-kinase C2 domain-containing subunit gamma (PIK3C2G) from Homo sapiens (Human).